A 622-amino-acid polypeptide reads, in one-letter code: FERM domain-containing protein 6 (622 aa).

The FERM domain occupies 16-328 (RRVCIFLPND…NSHRLYMNLQ (313 aa)). The disordered stretch occupies residues 357–452 (LDMDPLEKRS…KDRLEEDSQD (96 aa)). Low complexity-rich tracts occupy residues 384-395 (HSTASHSSSHTS) and 425-438 (SSMT…TSGV). At Ser522 the chain carries Phosphoserine. Residue Thr523 is modified to Phosphothreonine. Phosphoserine occurs at positions 525, 542, and 544.

The protein localises to the cytoplasm. It localises to the cell membrane. The protein is FERM domain-containing protein 6 (Frmd6) of Mus musculus (Mouse).